The chain runs to 480 residues: Flap endonuclease 1 (480 aa).

An N-domain region spans residues 1–106 (MGIKGLTKFI…SELEKRGEKR (106 aa)). Aspartate 34 contributes to the Mg(2+) binding site. Arginine 47 and arginine 72 together coordinate DNA. Residues aspartate 88, glutamate 160, glutamate 162, aspartate 181, and aspartate 183 each contribute to the Mg(2+) site. The interval 124–266 (EIKKQSGRTV…KTAYNLIKEY (143 aa)) is I-domain. DNA is bound at residue glutamate 160. DNA-binding residues include glycine 244 and aspartate 246. Aspartate 246 is a binding site for Mg(2+). Residues 349–357 (TQRRLDTFF) form an interaction with PCNA region. Residues 379 to 461 (TKGKGKKREI…NIKNENVKED (83 aa)) are disordered. Positions 404–428 (NVKDEKKNNEKVDELKNKSDENLVK) are enriched in basic and acidic residues. A compositionally biased stretch (acidic residues) spans 429–438 (DEEDDQDDYD).

This sequence belongs to the XPG/RAD2 endonuclease family. FEN1 subfamily. As to quaternary structure, interacts with PCNA. Three molecules of FEN1 bind to one PCNA trimer with each molecule binding to one PCNA monomer. PCNA stimulates the nuclease activity without altering cleavage specificity. The cofactor is Mg(2+). In terms of processing, phosphorylated. Phosphorylation upon DNA damage induces relocalization to the nuclear plasma.

The protein localises to the nucleus. It localises to the nucleolus. The protein resides in the nucleoplasm. It is found in the mitochondrion. Its activity is regulated as follows. Inhibited by monovalent metal ions. Its function is as follows. Structure-specific nuclease with 5'-flap endonuclease and 5'-3' exonuclease activities involved in DNA replication and repair. During DNA replication, cleaves the 5'-overhanging flap structure that is generated by displacement synthesis when DNA polymerase encounters the 5'-end of a downstream Okazaki fragment. It enters the flap from the 5'-end and then tracks to cleave the flap base, leaving a nick for ligation. Also involved in the long patch base excision repair (LP-BER) pathway, by cleaving within the apurinic/apyrimidinic (AP) site-terminated flap. Acts as a genome stabilization factor that prevents flaps from equilibrating into structures that lead to duplications and deletions. Also possesses 5'-3' exonuclease activity on nicked or gapped double-stranded DNA, and exhibits RNase H activity. Also involved in replication and repair of rDNA and in repairing mitochondrial DNA. The sequence is that of Flap endonuclease 1 from Plasmodium yoelii yoelii.